The sequence spans 64 residues: Small hydrophobic protein (64 aa).

Topologically, residues 1–20 (MENTSITIEFSSKFWPYFTL) are intravirion. Positions 6 to 15 (ITIEFSSKFW) are interaction with host BCAP31. A helical; Signal-anchor for type II membrane protein transmembrane segment spans residues 21–44 (IHMITTIISLLIIISIMIAILNKL). An interaction with small-molecule inhibitor region spans residues 38–43 (IAILNK). Over 45–64 (CEYNVFHNKTFELPRARVNT) the chain is Virion surface. N-linked (GlcNAc...) asparagine; by host glycosylation is present at N52.

The protein belongs to the orthopneumovirus small hydrophobic protein family. In terms of assembly, homopentamer forming a funnel-like pore. Interacts with glycoprotein G; this interaction occurs on the surface of virion particles and infected cells. Interacts with host BCAP31 (via C-terminus); this interaction is direct. Post-translationally, four species of SH have been detected in infected cell cytoplasm: a 7.5 kDa non-glycosylated form (SH0), a 13-15 kDa form that contains one or two N-linked carbohydrate side chains of the high-mannose type (SHg), a 21-30 kDa polylactosaminoglycan-modified form of the protein (SHp), and the isoform generated by alternative translational initiation. Of these different forms, SH0 is by far the most abundant protein detected during virus infection. Tyrosine phosphorylated.

It is found in the virion membrane. The protein localises to the host cell membrane. Its subcellular location is the host Golgi apparatus membrane. The protein resides in the host endoplasmic reticulum membrane. With respect to regulation, channel activity is inhibited by copper. Also inhibited by small-molecule pyronin B. In terms of biological role, viroporin that forms a homopentameric ion channel displaying low ion selectivity. May play a role in virus morphogenesis and pathogenicity at various stages of the viral life cycle. Accumulates at the membrane of the Golgi apparatus in infected cells and may facilitate virus release by modifying the secretory pathway. May enhance host membrane permeability and disrupt cellular ion homeostasis, which can be sensed as damage-associated molecular patterns/danger signals, triggering NLRP3 inflammasome activation and inflammatory immune response. Also inhibits host TNFA-mediated signaling pathway and may delay apoptosis, allowing time for the virus to replicate. In Homo sapiens (Human), this protein is Small hydrophobic protein.